The sequence spans 463 residues: Putative sodium-coupled neutral amino acid transporter 11 (463 aa).

Positions 1 to 27 are disordered; the sequence is MGYPGQRPVIPPQSHRDDRETLVSEHK. The span at 14-25 shows a compositional bias: basic and acidic residues; the sequence is SHRDDRETLVSE. 11 helical membrane-spanning segments follow: residues 38 to 58, 65 to 85, 105 to 125, 150 to 170, 178 to 198, 225 to 245, 256 to 276, 298 to 320, 336 to 356, 358 to 378, and 397 to 417; these read AVFN…PYSM, LGIL…ILLI, GFPG…IAMI, LLIG…LPLS, LGKI…IVVA, VGVM…YGSL, IIHV…TCGY, VTFG…CFVT, VCHI…SLLI, CLGI…IFII, and IMSC…FVMA. 3 N-linked (GlcNAc...) asparagine glycosylation sites follow: Asn-437, Asn-442, and Asn-458.

This sequence belongs to the amino acid/polyamine transporter 2 family.

Its subcellular location is the membrane. In terms of biological role, putative sodium-dependent amino acid/proton antiporter. The chain is Putative sodium-coupled neutral amino acid transporter 11 (SLC38A11) from Bos taurus (Bovine).